A 610-amino-acid polypeptide reads, in one-letter code: Dopamine beta-hydroxylase (610 aa).

Residues 1–9 (MQVPSPSVR) are Cytoplasmic-facing. The helical; Signal-anchor for type II membrane protein transmembrane segment at 10–30 (EAASMYGTAVAVFLVILVAAL) threads the bilayer. The Intragranular segment spans residues 31-610 (QGSAPAESPF…TVLNISGGKG (580 aa)). The 117-residue stretch at 50–166 (GTLELSWNIS…GTVHLVYGFL (117 aa)) folds into the DOMON domain. 6 disulfide bridges follow: cysteine 147/cysteine 589, cysteine 225/cysteine 276, cysteine 262/cysteine 288, cysteine 383/cysteine 496, cysteine 387/cysteine 558, and cysteine 459/cysteine 481. N-linked (GlcNAc...) asparagine glycosylation occurs at asparagine 177. Residue tyrosine 223 is part of the active site. Cu(2+) contacts are provided by histidine 255 and histidine 256. Positions 326, 405, 407, and 480 each coordinate Cu(2+). Histidine 405 is a catalytic residue. A glycan (N-linked (GlcNAc...) asparagine) is linked at asparagine 559. The segment at 585 to 610 (PTPHCPASQAQSPAGPTVLNISGGKG) is disordered.

This sequence belongs to the copper type II ascorbate-dependent monooxygenase family. Homotetramer; composed of two disulfide-linked dimers. Cu(2+) serves as cofactor. Post-translationally, proteolytic cleavage after the membrane-anchor leads to the release of the soluble form. N-glycosylated. As to expression, detected in chromaffin granules in the adrenal medulla (at protein level). Detected in adrenal medulla.

It localises to the cytoplasmic vesicle. It is found in the secretory vesicle lumen. Its subcellular location is the secretory vesicle. The protein resides in the chromaffin granule lumen. The protein localises to the secretory vesicle membrane. It localises to the chromaffin granule membrane. The enzyme catalyses dopamine + 2 L-ascorbate + O2 = (R)-noradrenaline + 2 monodehydro-L-ascorbate radical + H2O. It participates in catecholamine biosynthesis; (R)-noradrenaline biosynthesis; (R)-noradrenaline from dopamine: step 1/1. Its function is as follows. Catalyzes the hydroxylation of dopamine to noradrenaline (also known as norepinephrine), and is thus vital for regulation of these neurotransmitters. This chain is Dopamine beta-hydroxylase (DBH), found in Bos taurus (Bovine).